The sequence spans 863 residues: Neuroligin-1 (863 aa).

An N-terminal signal peptide occupies residues 1-45; it reads MALPRCTWPNYVWRAVMACLVHRGLGAPLTLCMLGCLLQAGHVLS. Over 46-717 the chain is Extracellular; sequence QKLDDVDPLV…DQRDYSTELS (672 aa). N-linked (GlcNAc...) (complex) asparagine glycosylation is present at N109. C117 and C153 are disulfide-bonded. Residues 183–212 form a disordered region; the sequence is KGGPLTKKQTDDLGDNDGAEDEDIRDSGGP. The segment covering 194–206 has biased composition (acidic residues); it reads DLGDNDGAEDEDI. N323 and N363 each carry an N-linked (GlcNAc...) (complex) asparagine glycan. Disulfide bonds link C362/C373 and C532/C566. The N-linked (GlcNAc...) asparagine glycan is linked to N567. Positions 670-708 are disordered; that stretch reads PSTDITFRPTRKNSVPVTSAFPTAKQDDPKQQPSPFSVD. Residues 681-690 show a composition bias toward polar residues; sequence KNSVPVTSAF. S703 and S706 each carry an O-linked (GalNAc...) serine glycan. The chain crosses the membrane as a helical span at residues 718–738; sequence VTIAVGASLLFLNILAFAALY. The Cytoplasmic segment spans residues 739–863; it reads YKKDKRRHDV…HPHSHSTTRV (125 aa). The tract at residues 842 to 863 is disordered; it reads GGQNNTLPHPHPHPHSHSTTRV. The segment covering 851-863 has biased composition (basic residues); the sequence is PHPHPHSHSTTRV.

It belongs to the type-B carboxylesterase/lipase family. Interacts with neurexins NRXN1, NRXN2 and NRXN3. Interaction with neurexins is mediated by heparan sulfate glycan modification on neurexin. Interacts with NLGN3. Interacts with AIP1 and PDZRN3. Interacts (via its C-terminus) with DLG4/PSD-95 (via PDZ domain 3). Interacts with GOPC. As to expression, expressed in the blood vessel walls (at protein level). Highly expressed in brain through prenatal stages, and at lower levels in pancreas islet beta cells.

Its subcellular location is the cell membrane. It is found in the postsynaptic density. The protein resides in the synaptic cleft. The protein localises to the synaptic cell membrane. Its function is as follows. Cell surface protein involved in cell-cell-interactions via its interactions with neurexin family members. Plays a role in synapse function and synaptic signal transmission, and probably mediates its effects by recruiting and clustering other synaptic proteins. May promote the initial formation of synapses, but is not essential for this. In vitro, triggers the de novo formation of presynaptic structures. May be involved in specification of excitatory synapses. Required to maintain wakefulness quality and normal synchrony of cerebral cortex activity during wakefulness and sleep. The protein is involved in nervous system development. The protein is Neuroligin-1 (NLGN1) of Homo sapiens (Human).